We begin with the raw amino-acid sequence, 305 residues long: Oxygen-dependent coproporphyrinogen-III oxidase (305 aa).

Serine 98 serves as a coordination point for substrate. A divalent metal cation-binding residues include histidine 102 and histidine 112. The active-site Proton donor is the histidine 112. Asparagine 114–arginine 116 is a substrate binding site. Residues histidine 151 and histidine 181 each contribute to the a divalent metal cation site. The tract at residues tyrosine 246–glutamate 281 is important for dimerization. Glycine 264–arginine 266 lines the substrate pocket.

Belongs to the aerobic coproporphyrinogen-III oxidase family. In terms of assembly, homodimer. It depends on a divalent metal cation as a cofactor.

Its subcellular location is the cytoplasm. The enzyme catalyses coproporphyrinogen III + O2 + 2 H(+) = protoporphyrinogen IX + 2 CO2 + 2 H2O. The protein operates within porphyrin-containing compound metabolism; protoporphyrin-IX biosynthesis; protoporphyrinogen-IX from coproporphyrinogen-III (O2 route): step 1/1. Involved in the heme biosynthesis. Catalyzes the aerobic oxidative decarboxylation of propionate groups of rings A and B of coproporphyrinogen-III to yield the vinyl groups in protoporphyrinogen-IX. The protein is Oxygen-dependent coproporphyrinogen-III oxidase of Vibrio vulnificus (strain CMCP6).